The sequence spans 1340 residues: TSET complex member tstE (1340 aa).

Low complexity predominate over residues 56-67 (NQSQTSPNSNDG). Disordered stretches follow at residues 56-75 (NQSQ…GSGG) and 110-131 (SGSG…GGGQ). WD repeat units follow at residues 208-246 (VNQI…VIGK), 250-294 (DPTE…LQTI), 345-384 (GHKK…SFLN), and 397-436 (IEHS…NPQE). Over residues 1216 to 1251 (KSHMSSTTTLRRSPSIENIRTTSTTFDSSKFNTDNQ) the composition is skewed to polar residues. The tract at residues 1216–1340 (KSHMSSTTTL…TPTPTTTLSS (125 aa)) is disordered. Over residues 1252–1275 (ELFDDDSDDDSDSGADADVDSENE) the composition is skewed to acidic residues. Residues 1286 to 1318 (ASLQHNDNSSLTNITVTDNDSNLDQDITSNTGS) are compositionally biased toward polar residues. Residues 1328–1340 (LSSTPTPTTTLSS) show a composition bias toward low complexity.

Component of the TSET complex, a heterohexamer composed of tstA, tstB, tstC, tstD, tstE and tstF, which may act in plasma membrane turnover. tstA, tstB, tstC and tstD are likely to be the core complex members with tstE and tstF acting as associated scaffold proteins.

This is TSET complex member tstE from Dictyostelium discoideum (Social amoeba).